A 498-amino-acid chain; its full sequence is Angiopoietin-4 (498 aa).

The signal sequence occupies residues 1 to 22 (MPSPPAMLLGGLLLIVASTTVA). A disordered region spans residues 51–80 (EPEPCPPEPEAFGGSNSLQRDSPAATLNLG). Residues 85 to 109 (QRMRQLEKMLENNTQWLQKLERYIQ) adopt a coiled-coil conformation. 8 N-linked (GlcNAc...) asparagine glycosylation sites follow: Asn96, Asn126, Asn158, Asn247, Asn295, Asn306, Asn332, and Asn424. Residues 186-254 (HELHRLQGHN…SSNSSLLQRQ (69 aa)) adopt a coiled-coil conformation. The Fibrinogen C-terminal domain maps to 277 to 497 (RAADQLFQDC…TTRMMVRPSG (221 aa)). Residues Cys286 and Cys315 are joined by a disulfide bond. The cysteines at positions 439 and 452 are disulfide-linked.

Homodimer; disulfide-linked. Interacts with TEK/TIE2.

The protein localises to the secreted. Its function is as follows. Binds to TEK/TIE2, modulating ANGPT1 signaling. Can induce tyrosine phosphorylation of TEK/TIE2. Promotes endothelial cell survival, migration and angiogenesis. The polypeptide is Angiopoietin-4 (ANGPT4) (Bos taurus (Bovine)).